A 108-amino-acid polypeptide reads, in one-letter code: uncharacterized protein (108 aa).

This is an uncharacterized protein from Methanocaldococcus jannaschii (strain ATCC 43067 / DSM 2661 / JAL-1 / JCM 10045 / NBRC 100440) (Methanococcus jannaschii).